A 154-amino-acid chain; its full sequence is Ribosomal RNA large subunit methyltransferase H (154 aa).

2 residues coordinate S-adenosyl-L-methionine: L70 and G102.

The protein belongs to the RNA methyltransferase RlmH family. Homodimer.

The protein resides in the cytoplasm. The catalysed reaction is pseudouridine(1915) in 23S rRNA + S-adenosyl-L-methionine = N(3)-methylpseudouridine(1915) in 23S rRNA + S-adenosyl-L-homocysteine + H(+). Functionally, specifically methylates the pseudouridine at position 1915 (m3Psi1915) in 23S rRNA. This is Ribosomal RNA large subunit methyltransferase H from Hyphomonas neptunium (strain ATCC 15444).